Reading from the N-terminus, the 257-residue chain is Triosephosphate isomerase, cytosolic (257 aa).

Asparagine 10 and lysine 12 together coordinate substrate. The active-site Electrophile is histidine 96. Catalysis depends on glutamate 167, which acts as the Proton acceptor.

Belongs to the triosephosphate isomerase family. As to quaternary structure, homodimer. In terms of tissue distribution, higher levels found in leaves than in roots.

The protein resides in the cytoplasm. The catalysed reaction is D-glyceraldehyde 3-phosphate = dihydroxyacetone phosphate. It functions in the pathway carbohydrate biosynthesis; gluconeogenesis. It participates in carbohydrate degradation; glycolysis; D-glyceraldehyde 3-phosphate from glycerone phosphate: step 1/1. This chain is Triosephosphate isomerase, cytosolic (TPI), found in Stellaria longipes (Longstalk starwort).